The chain runs to 497 residues: MVSEFPGPGSRVPWRPRDEALRVNVGGVRRLLSARALARFPGTRLGRLQAAVSEEQARRLCDDYDAAAREFYFDRHPGFFLGLLHFYRTGHLHVLDELCVFAFGQEADYWGLGENALATCCRARYLERRVTRPRAWDEDSDAPSSVDPCPDEISDVQRELARYGAARCGRLRRRLWLTMENPGYSLPSKLFSCVSIGVVLASIAAMCIHSLPEYQAREAAAAVAAVAAGRSAEDVRDDPVLRRLEYFCIAWFSFEVSSRLLLAPSTRNFFCHPLNLIDIVSVLPFYLTLLAGAALGDRRGASGEELGDLGKVVQVFRLMRIFRVLKLARHSTGLRSLGATLKHSYREVGILLLYLAVGVSVFSGVAYTAEEKNVGFDTIPACWWWGTVSMTTVGYGDVVPETVAGKLAASGCILGGILVVALPITIIFNKFSHFYRRQKALEAAVRSSGQREFEDLLSSVDGVSDVSLETSRETSQEGRSTDLETQAPSEPAKSHSY.

The Cytoplasmic segment spans residues 1-186; that stretch reads MVSEFPGPGS…LTMENPGYSL (186 aa). The chain crosses the membrane as a helical span at residues 187 to 208; that stretch reads PSKLFSCVSIGVVLASIAAMCI. Residues 209–239 lie on the Extracellular side of the membrane; sequence HSLPEYQAREAAAAVAAVAAGRSAEDVRDDP. The chain crosses the membrane as a helical span at residues 240-262; sequence VLRRLEYFCIAWFSFEVSSRLLL. The Cytoplasmic portion of the chain corresponds to 263–273; the sequence is APSTRNFFCHP. Residues 274–291 traverse the membrane as a helical segment; that stretch reads LNLIDIVSVLPFYLTLLA. Residues 292 to 309 lie on the Extracellular side of the membrane; the sequence is GAALGDRRGASGEELGDL. A helical; Voltage-sensor transmembrane segment spans residues 310-330; that stretch reads GKVVQVFRLMRIFRVLKLARH. At 331-345 the chain is on the cytoplasmic side; it reads STGLRSLGATLKHSY. The chain crosses the membrane as a helical span at residues 346-367; that stretch reads REVGILLLYLAVGVSVFSGVAY. Residues 368–379 are Extracellular-facing; it reads TAEEKNVGFDTI. Residues 380-391 constitute an intramembrane region (helical); that stretch reads PACWWWGTVSMT. The Selectivity filter signature appears at 392-397; it reads TVGYGD. The stretch at 392–399 is an intramembrane region; that stretch reads TVGYGDVV. Residues 400 to 406 are Extracellular-facing; that stretch reads PETVAGK. Residues 407–435 form a helical membrane-spanning segment; that stretch reads LAASGCILGGILVVALPITIIFNKFSHFY. Over 436-497 the chain is Cytoplasmic; sequence RRQKALEAAV…PSEPAKSHSY (62 aa). The disordered stretch occupies residues 464–497; it reads SDVSLETSRETSQEGRSTDLETQAPSEPAKSHSY. The segment covering 470–482 has biased composition (basic and acidic residues); sequence TSRETSQEGRSTD.

It belongs to the potassium channel family. S (TC 1.A.1.2) subfamily. Kv9.1/KCNS1 sub-subfamily. Heterotetramer with KCNB1. Heterotetramer with KCNB2. Does not form homomultimers. As to expression, highly expressed in brain, but not in the other tissues tested.

It localises to the cell membrane. Functionally, potassium channel regulatory subunit that modulate the delayed rectifier voltage-gated potassium channel activity of KCNB1 and KCNB2 by altering their kinetics, expression levels, and shifting the half-inactivation potential to more polarized values. While it does not form functional channels on its own, it can form functional heterotetrameric channels with KCNB1 and KCNB2. Each regulatory subunit has unique regulatory properties that can lead to extensive inhibition, significant changes in kinetics, and/or substantial shifts in the voltage dependencies of the inactivation process. The protein is Delayed-rectifier potassium channel regulatory subunit KCNS1 of Rattus norvegicus (Rat).